We begin with the raw amino-acid sequence, 1266 residues long: Intermembrane phospholipid transporter YhdP (1266 aa).

Residues 1–5 are Cytoplasmic-facing; the sequence is MRRLP. A helical membrane pass occupies residues 6-26; it reads GILLLTGAALVVIAALLVSGL. Residues 27-1266 are Periplasmic-facing; sequence RIALPHLDAW…LRQPRKEKAQ (1240 aa). The interval 94 to 103 is P-helix; that stretch reads VWQSLLHMRW. The interval 1121–1144 is C-helix_2; that stretch reads HAGQLLRLLSVDALMRKLRFDFRD. The C-helix_1 stretch occupies residues 1203–1237; sequence ISATVGVAAAFAVNPIVGAAVFAASKVLGPLWSKV.

It is found in the cell inner membrane. Its function is as follows. Involved in outer membrane lipid homeostasis. Likely transports phospholipids between the inner membrane and the outer membrane. It would provide a bridge-like structure that protects phospholipids as they travel across the periplasm. The phosphate-containing molecules are captured along the length of a hydrophobic groove that is continuous along all but the extreme N-terminus of the protein. It also appears to control, directly or indirectly, levels of cyclic enterobacterial common antigen (cyclic ECA), a soluble cyclic ECA molecule present in the periplasm. In terms of biological role, tamB, YdbH and YhdP are redundant, but not equivalent, in performing an essential function for growth and maintaining lipid homeostasis in the outer membrane. The transport functions of TamB and YhdP could be differentiated according to the fatty acid saturation state of the phospholipids, with TamB transporting more unsaturated phospholipids and YhdP more saturated phospholipids. Any of these three proteins is sufficient for growth. The protein is Intermembrane phospholipid transporter YhdP (yhdP) of Escherichia coli (strain K12).